The primary structure comprises 202 residues: Probable nicotinate-nucleotide adenylyltransferase (202 aa).

Belongs to the NadD family.

The enzyme catalyses nicotinate beta-D-ribonucleotide + ATP + H(+) = deamido-NAD(+) + diphosphate. It participates in cofactor biosynthesis; NAD(+) biosynthesis; deamido-NAD(+) from nicotinate D-ribonucleotide: step 1/1. Functionally, catalyzes the reversible adenylation of nicotinate mononucleotide (NaMN) to nicotinic acid adenine dinucleotide (NaAD). The polypeptide is Probable nicotinate-nucleotide adenylyltransferase (Bacteroides thetaiotaomicron (strain ATCC 29148 / DSM 2079 / JCM 5827 / CCUG 10774 / NCTC 10582 / VPI-5482 / E50)).